The sequence spans 338 residues: Heat-inducible transcription repressor HrcA (338 aa).

Belongs to the HrcA family.

Its function is as follows. Negative regulator of class I heat shock genes (grpE-dnaK-dnaJ and groELS operons). Prevents heat-shock induction of these operons. The sequence is that of Heat-inducible transcription repressor HrcA from Bacillus mycoides (strain KBAB4) (Bacillus weihenstephanensis).